A 366-amino-acid polypeptide reads, in one-letter code: Ribosomal RNA large subunit methyltransferase M (366 aa).

S-adenosyl-L-methionine-binding positions include Ser-188, 221–224, Asp-240, Asp-260, and Asp-277; that span reads CPGG. Lys-306 (proton acceptor) is an active-site residue.

This sequence belongs to the class I-like SAM-binding methyltransferase superfamily. RNA methyltransferase RlmE family. RlmM subfamily. In terms of assembly, monomer.

It localises to the cytoplasm. It carries out the reaction cytidine(2498) in 23S rRNA + S-adenosyl-L-methionine = 2'-O-methylcytidine(2498) in 23S rRNA + S-adenosyl-L-homocysteine + H(+). Functionally, catalyzes the 2'-O-methylation at nucleotide C2498 in 23S rRNA. In Cronobacter sakazakii (strain ATCC BAA-894) (Enterobacter sakazakii), this protein is Ribosomal RNA large subunit methyltransferase M.